The chain runs to 372 residues: Spermidine/putrescine import ATP-binding protein PotA (372 aa).

The region spanning 13-243 (IKLTGISKSF…PKNLFVARFI (231 aa)) is the ABC transporter domain. ATP is bound at residue 45–52 (GPSGCGKT).

It belongs to the ABC transporter superfamily. Spermidine/putrescine importer (TC 3.A.1.11.1) family. The complex is composed of two ATP-binding proteins (PotA), two transmembrane proteins (PotB and PotC) and a solute-binding protein (PotD).

It is found in the cell inner membrane. The catalysed reaction is ATP + H2O + polyamine-[polyamine-binding protein]Side 1 = ADP + phosphate + polyamineSide 2 + [polyamine-binding protein]Side 1.. In terms of biological role, part of the ABC transporter complex PotABCD involved in spermidine/putrescine import. Responsible for energy coupling to the transport system. The polypeptide is Spermidine/putrescine import ATP-binding protein PotA (Aliivibrio fischeri (strain ATCC 700601 / ES114) (Vibrio fischeri)).